Consider the following 430-residue polypeptide: 3-phosphoshikimate 1-carboxyvinyltransferase (430 aa).

The disordered stretch occupies residues 1-20 (MHATVSPSRVRGRARAPPSK). 3 residues coordinate 3-phosphoshikimate: Lys-20, Ser-21, and Arg-25. Lys-20 serves as a coordination point for phosphoenolpyruvate. Gly-91 and Arg-119 together coordinate phosphoenolpyruvate. Ser-164, Ser-165, Gln-166, Ser-192, Asp-312, and Lys-339 together coordinate 3-phosphoshikimate. Residue Gln-166 participates in phosphoenolpyruvate binding. The active-site Proton acceptor is the Asp-312. Residues Arg-343 and Arg-386 each coordinate phosphoenolpyruvate.

The protein belongs to the EPSP synthase family. Monomer.

The protein resides in the cytoplasm. The enzyme catalyses 3-phosphoshikimate + phosphoenolpyruvate = 5-O-(1-carboxyvinyl)-3-phosphoshikimate + phosphate. It participates in metabolic intermediate biosynthesis; chorismate biosynthesis. Catalyzes the transfer of the enolpyruvyl moiety of phosphoenolpyruvate (PEP) to the 5-hydroxyl of shikimate-3-phosphate (S3P) to produce enolpyruvyl shikimate-3-phosphate and inorganic phosphate. This is 3-phosphoshikimate 1-carboxyvinyltransferase from Halobacterium salinarum (strain ATCC 29341 / DSM 671 / R1).